Reading from the N-terminus, the 317-residue chain is MARRSKGRFIDGIVLLDKATGMSSNFALQRVKRFFNANKAGHTGALDPLATGMLPVCLGEATKFSQHLLDSDKRYLVTAKLGQRTDTSDSDGEVVQTRPLEFTEAQLMSALEHFRGDTQQVPSMYSALKYQGQPLYKYAREGIEVPREARPITVFELNFIGLEGDELTLDIHCSKGTYIRTIIDDLGEMLGCGAHVIMLRRTQVAHYPYDKMVTLEQLEALVAKAQEEQLDPSSLLDSLLLPMDTAVADFPEVNVPDASAAYLMQGQAVRVSGLVADTLVRITLGTERRFVGIGEMNQDGLLAPKRLVVLHDQAKAS.

Residue D47 is the Nucleophile of the active site.

The protein belongs to the pseudouridine synthase TruB family. Type 1 subfamily.

The catalysed reaction is uridine(55) in tRNA = pseudouridine(55) in tRNA. Responsible for synthesis of pseudouridine from uracil-55 in the psi GC loop of transfer RNAs. The chain is tRNA pseudouridine synthase B from Shewanella sp. (strain ANA-3).